The following is a 118-amino-acid chain: Holo-[acyl-carrier-protein] synthase (118 aa).

Residues aspartate 8 and glutamate 58 each coordinate Mg(2+).

Belongs to the P-Pant transferase superfamily. AcpS family. Requires Mg(2+) as cofactor.

The protein localises to the cytoplasm. It catalyses the reaction apo-[ACP] + CoA = holo-[ACP] + adenosine 3',5'-bisphosphate + H(+). In terms of biological role, transfers the 4'-phosphopantetheine moiety from coenzyme A to a Ser of acyl-carrier-protein. This chain is Holo-[acyl-carrier-protein] synthase, found in Streptococcus pyogenes serotype M5 (strain Manfredo).